A 339-amino-acid chain; its full sequence is MIFIDACFRKETPYTPIWMMRQAGRYLSEYQESRKKAGSFLELCKNSDLATEVTLQPVEILGVDAAILFSDILVVPLEMGLNLEFIPKKGPHFLETITDLKSVESLKVGAYKQLNYVYDTISQTRQKLSKEKALIGFCGSPWTLATYMIEGEGSKSYAKSKKMLYSEPEILKALLEKLSLELIEYLSLQIQAGVNAVMIFDSWASALEKEAYLKFSWDYLKKISKELKKRYPHIPVILFPKGIGAYLDSIDGEFDVFGVDWGTPLTAAKKILGGKYVLQGNLEPTRLYDKNALEEGVETILKVMGNQGHIFNLGHGMLPDLPRENAKYLVQLVHAKTRR.

Residues 21–25 (RQAGR), Asp71, Tyr147, Ser202, and His315 contribute to the substrate site.

This sequence belongs to the uroporphyrinogen decarboxylase family. Homodimer.

Its subcellular location is the cytoplasm. It carries out the reaction uroporphyrinogen III + 4 H(+) = coproporphyrinogen III + 4 CO2. It functions in the pathway porphyrin-containing compound metabolism; protoporphyrin-IX biosynthesis; coproporphyrinogen-III from 5-aminolevulinate: step 4/4. Catalyzes the decarboxylation of four acetate groups of uroporphyrinogen-III to yield coproporphyrinogen-III. This Helicobacter pylori (strain G27) protein is Uroporphyrinogen decarboxylase.